The sequence spans 198 residues: Recombination protein RecR (198 aa).

Residues cysteine 57–cysteine 72 form a C4-type zinc finger. One can recognise a Toprim domain in the interval asparagine 80 to proline 173.

It belongs to the RecR family.

Its function is as follows. May play a role in DNA repair. It seems to be involved in an RecBC-independent recombinational process of DNA repair. It may act with RecF and RecO. The chain is Recombination protein RecR from Deinococcus deserti (strain DSM 17065 / CIP 109153 / LMG 22923 / VCD115).